A 173-amino-acid chain; its full sequence is Crossover junction endodeoxyribonuclease RuvC (173 aa).

Catalysis depends on residues Asp-11, Glu-71, and Asp-143. Residues Asp-11, Glu-71, and Asp-143 each contribute to the Mg(2+) site.

It belongs to the RuvC family. As to quaternary structure, homodimer which binds Holliday junction (HJ) DNA. The HJ becomes 2-fold symmetrical on binding to RuvC with unstacked arms; it has a different conformation from HJ DNA in complex with RuvA. In the full resolvosome a probable DNA-RuvA(4)-RuvB(12)-RuvC(2) complex forms which resolves the HJ. Mg(2+) serves as cofactor.

The protein resides in the cytoplasm. It carries out the reaction Endonucleolytic cleavage at a junction such as a reciprocal single-stranded crossover between two homologous DNA duplexes (Holliday junction).. Functionally, the RuvA-RuvB-RuvC complex processes Holliday junction (HJ) DNA during genetic recombination and DNA repair. Endonuclease that resolves HJ intermediates. Cleaves cruciform DNA by making single-stranded nicks across the HJ at symmetrical positions within the homologous arms, yielding a 5'-phosphate and a 3'-hydroxyl group; requires a central core of homology in the junction. The consensus cleavage sequence is 5'-(A/T)TT(C/G)-3'. Cleavage occurs on the 3'-side of the TT dinucleotide at the point of strand exchange. HJ branch migration catalyzed by RuvA-RuvB allows RuvC to scan DNA until it finds its consensus sequence, where it cleaves and resolves the cruciform DNA. In Brucella suis (strain ATCC 23445 / NCTC 10510), this protein is Crossover junction endodeoxyribonuclease RuvC.